A 470-amino-acid chain; its full sequence is Glutamate--tRNA ligase (470 aa).

A 'HIGH' region motif is present at residues 9–19; sequence PSPTGFLHVGG. Residues 236-240 carry the 'KMSKS' region motif; sequence RLSKR. Lysine 239 contributes to the ATP binding site.

The protein belongs to the class-I aminoacyl-tRNA synthetase family. Glutamate--tRNA ligase type 1 subfamily. In terms of assembly, monomer.

It is found in the cytoplasm. It catalyses the reaction tRNA(Glu) + L-glutamate + ATP = L-glutamyl-tRNA(Glu) + AMP + diphosphate. Catalyzes the attachment of glutamate to tRNA(Glu) in a two-step reaction: glutamate is first activated by ATP to form Glu-AMP and then transferred to the acceptor end of tRNA(Glu). This chain is Glutamate--tRNA ligase, found in Legionella pneumophila (strain Corby).